Reading from the N-terminus, the 538-residue chain is Atos homolog protein B (538 aa).

4 disordered regions span residues 1–103 (MRHV…GLVS), 130–149 (GSAT…PSSN), 163–185 (PDQG…QLHT), and 199–272 (KSPV…LGCP). A compositionally biased stretch (low complexity) spans 130 to 148 (GSATSSWTSGTQSTPWPSS). Residues 227–238 (HTPPGPGPPGPC) are compositionally biased toward pro residues. Ser254 and Ser255 each carry phosphoserine. The tract at residues 348–430 (LLGNFEESLL…VPKVGTIQVT (83 aa)) is required for macropage invasion. The transactivation domain 1 (TAD1) stretch occupies residues 436 to 444 (QTVVKMFLV).

Belongs to the ATOS family.

It localises to the nucleus. In terms of biological role, transcription regulator that may syncronize transcriptional and translational programs. This is Atos homolog protein B from Rattus norvegicus (Rat).